The sequence spans 428 residues: Glutamate-1-semialdehyde 2,1-aminomutase (428 aa).

Lys265 is subject to N6-(pyridoxal phosphate)lysine.

This sequence belongs to the class-III pyridoxal-phosphate-dependent aminotransferase family. HemL subfamily. Homodimer. The cofactor is pyridoxal 5'-phosphate.

The protein localises to the cytoplasm. The catalysed reaction is (S)-4-amino-5-oxopentanoate = 5-aminolevulinate. The protein operates within porphyrin-containing compound metabolism; protoporphyrin-IX biosynthesis; 5-aminolevulinate from L-glutamyl-tRNA(Glu): step 2/2. This Aeromonas salmonicida (strain A449) protein is Glutamate-1-semialdehyde 2,1-aminomutase.